We begin with the raw amino-acid sequence, 674 residues long: Xaa-Pro aminopeptidase 2 (674 aa).

The signal sequence occupies residues 1-22 (MAQAYWQCYPWLVLLCACAWSY). N-linked (GlcNAc...) asparagine glycosylation occurs at asparagine 65. Residue arginine 116 participates in substrate binding. N-linked (GlcNAc...) asparagine glycans are attached at residues asparagine 270, asparagine 278, and asparagine 293. Histidine 430 contributes to the substrate binding site. Zn(2+) is bound by residues aspartate 450, aspartate 461, and histidine 524. Substrate is bound by residues histidine 524, histidine 533, and glutamate 555. Residues glutamate 555 and glutamate 569 each contribute to the Zn(2+) site. Alanine 650 carries the GPI-anchor amidated alanine lipid modification. A propeptide spans 651 to 674 (RAPHIISWTSLWVASALAILSWSS) (removed in mature form).

Belongs to the peptidase M24B family. As to quaternary structure, homotrimer. Zn(2+) serves as cofactor. N-glycosylated. As to expression, strongly expressed in small intestine, heart and lung. Also detected in testis, skeletal muscle, spleen, liver, kidney, brain, uterus, eye, lymph node, thymus, stomach, prostate and bone marrow.

It is found in the cell membrane. The catalysed reaction is Release of any N-terminal amino acid, including proline, that is linked to proline, even from a dipeptide or tripeptide.. In terms of biological role, membrane-bound metalloprotease which catalyzes the removal of a penultimate prolyl residue from the N-termini of peptides, such as Arg-Pro-Pro. May play a role in the metabolism of the vasodilator bradykinin. The protein is Xaa-Pro aminopeptidase 2 of Mus musculus (Mouse).